A 509-amino-acid chain; its full sequence is Maturase K (509 aa).

It belongs to the intron maturase 2 family. MatK subfamily.

The protein resides in the plastid. It is found in the chloroplast. Usually encoded in the trnK tRNA gene intron. Probably assists in splicing its own and other chloroplast group II introns. The chain is Maturase K from Avicennia marina (Grey mangrove).